We begin with the raw amino-acid sequence, 74 residues long: Somatostatin-2 (74 aa).

The propeptide occupies alanine 1–glutamate 46. Cysteines 63 and 74 form a disulfide.

The protein belongs to the somatostatin family.

The protein resides in the secreted. Functionally, somatostatin inhibits the release of somatotropin. This Myoxocephalus scorpius (Shorthorn sculpin) protein is Somatostatin-2 (sst2).